The following is a 765-amino-acid chain: MQIRYLLALSLLPKLVLADESPATSASQCLIEPPVPRIVSQPGLSAADQAKIRIASDRSKAEMGKQAIFTGDVVFSQGDRHIAADEAILDQATEQFDANGNLVFQDSNFTVTADSLQAQMRSNRATLTGAQYWLHGQQVHGDAEKLQITINNNLILTNTNFTTCPPDNVSWLLEAEKIKINSEEEWGEIWNAKLRVADIPVFYIPYMTVPVSDKRKTGFLYPSFSTSTTNGFEVSAPYYWNIAPEYDLTFTPNYMTNRGLFTKTEFRYLAGEAQNGRLNLEYLGSDQMLNGSPNRYLYNWQHQGAIDKNWRVLANFTEVSDNNYFNDLKSDVNRATDNQLSRIGEVSYFERDWDISTRVQDIKVLGEDEKPYQVMPQVNFNYRAADFWNNLDFGFNSELTNFAHQDDDVNTATRLHMAPSLTLPIHGPSGSFTSQLKLMQTNYWQEKNNSKFDSLDDTVSRTIPQVRINGQINFERFTELFEHNYRQTLEPQFQYLYVGYEDQRGIGIYDTAQLQDDYFGLFRDRRFSGLDRIADANQVTLGITTRLFDDHNQEATKFSLGQIFYLQDSKLGYEDNIFEQNQSTSVLAAELDTRLSSNWYLGAAIQYDTNTSDNKKTEVTLDFRPEANKLLQFSYRYVPDLLNSNTNDLVNISQAGVRGAWPINDSLYFVGNWYYDLNETRSIETYTGVQYESCCYAIRLSYHYRIKTNYDDNIGSTIIDEREQFESGVYLNLIIKGLGGSGPLGVSDMLNDGLFNYRKPLYLRN.

Positions 1–18 (MQIRYLLALSLLPKLVLA) are cleaved as a signal peptide.

It belongs to the LptD family. In terms of assembly, component of the lipopolysaccharide transport and assembly complex. Interacts with LptE and LptA.

It is found in the cell outer membrane. Together with LptE, is involved in the assembly of lipopolysaccharide (LPS) at the surface of the outer membrane. The protein is LPS-assembly protein LptD of Shewanella oneidensis (strain ATCC 700550 / JCM 31522 / CIP 106686 / LMG 19005 / NCIMB 14063 / MR-1).